Consider the following 362-residue polypeptide: Cobalt-precorrin-5B C(1)-methyltransferase (362 aa).

It belongs to the CbiD family.

The enzyme catalyses Co-precorrin-5B + S-adenosyl-L-methionine = Co-precorrin-6A + S-adenosyl-L-homocysteine. It functions in the pathway cofactor biosynthesis; adenosylcobalamin biosynthesis; cob(II)yrinate a,c-diamide from sirohydrochlorin (anaerobic route): step 6/10. Its function is as follows. Catalyzes the methylation of C-1 in cobalt-precorrin-5B to form cobalt-precorrin-6A. The sequence is that of Cobalt-precorrin-5B C(1)-methyltransferase from Synechococcus sp. (strain CC9902).